A 156-amino-acid chain; its full sequence is Small ribosomal subunit protein uS7 (156 aa).

It belongs to the universal ribosomal protein uS7 family. Part of the 30S ribosomal subunit. Contacts proteins S9 and S11.

Its function is as follows. One of the primary rRNA binding proteins, it binds directly to 16S rRNA where it nucleates assembly of the head domain of the 30S subunit. Is located at the subunit interface close to the decoding center, probably blocks exit of the E-site tRNA. This chain is Small ribosomal subunit protein uS7, found in Sorangium cellulosum (strain So ce56) (Polyangium cellulosum (strain So ce56)).